The chain runs to 448 residues: Nucleoprotein (448 aa).

Residues 1–55 (MSFTPGKQSSSRASSGNRSGNGILKWADQSDQSRNVQTRGRRAQSKQTATSQQPS) form a disordered region. The segment covering 9-22 (SSSRASSGNRSGNG) has biased composition (low complexity). 2 stretches are compositionally biased toward polar residues: residues 29–38 (QSDQSRNVQT) and 45–55 (SKQTATSQQPS). The segment at 52–194 (QQPSGGNVVP…GYYIEGSGRS (143 aa)) is RNA-binding. A CoV N NTD domain is found at 61-190 (PYYSWFSGIT…VLPQGYYIEG (130 aa)). RNA-binding residues include Arg106, Arg122, and Arg164. Disordered regions lie at residues 158–231 (PADI…VTPD) and 383–420 (QDGT…RVQQ). A Phosphoserine; by host modification is found at Ser167. Thr174 carries the phosphothreonine; by host modification. A Phosphoserine; by host modification is found at Ser191. The segment covering 193-223 (RSAPNSRSTSRASSRASSAGSRSRANSGNRT) has biased composition (low complexity). The CoV N CTD domain occupies 259 to 384 (AKEIRQKILN…ENLNAYQQQD (126 aa)). A dimerization region spans residues 266–384 (ILNKPRQKRS…ENLNAYQQQD (119 aa)). Composition is skewed to polar residues over residues 383 to 393 (QDGTMNMSPKP) and 399 to 409 (QKNGQGENDNI). Ser390 carries the post-translational modification Phosphoserine; by host. Phosphothreonine; by host is present on Thr427.

Belongs to the betacoronavirus nucleocapsid protein family. Homooligomer. Both monomeric and oligomeric forms interact with RNA. Interacts with protein M. Interacts with NSP3; this interaction serves to tether the genome to the newly translated replicase-transcriptase complex at a very early stage of infection. Post-translationally, ADP-ribosylated. The ADP-ribosylation is retained in the virion during infection. Phosphorylated on serine and threonine residues.

The protein resides in the virion. Its subcellular location is the host endoplasmic reticulum-Golgi intermediate compartment. The protein localises to the host Golgi apparatus. Its function is as follows. Packages the positive strand viral genome RNA into a helical ribonucleocapsid (RNP) and plays a fundamental role during virion assembly through its interactions with the viral genome and membrane protein M. Plays an important role in enhancing the efficiency of subgenomic viral RNA transcription as well as viral replication. The protein is Nucleoprotein of Bovine coronavirus (strain 98TXSF-110-LUN) (BCoV-LUN).